A 224-amino-acid polypeptide reads, in one-letter code: dTTP/UTP pyrophosphatase (224 aa).

Aspartate 77 serves as the catalytic Proton acceptor.

It belongs to the Maf family. YhdE subfamily. It depends on a divalent metal cation as a cofactor.

It is found in the cytoplasm. It catalyses the reaction dTTP + H2O = dTMP + diphosphate + H(+). The catalysed reaction is UTP + H2O = UMP + diphosphate + H(+). Its function is as follows. Nucleoside triphosphate pyrophosphatase that hydrolyzes dTTP and UTP. May have a dual role in cell division arrest and in preventing the incorporation of modified nucleotides into cellular nucleic acids. This is dTTP/UTP pyrophosphatase from Dehalococcoides mccartyi (strain ATCC BAA-2266 / KCTC 15142 / 195) (Dehalococcoides ethenogenes (strain 195)).